A 360-amino-acid chain; its full sequence is UDP-3-O-acylglucosamine N-acyltransferase (360 aa).

The active-site Proton acceptor is histidine 248.

The protein belongs to the transferase hexapeptide repeat family. LpxD subfamily. As to quaternary structure, homotrimer.

It carries out the reaction a UDP-3-O-[(3R)-3-hydroxyacyl]-alpha-D-glucosamine + a (3R)-hydroxyacyl-[ACP] = a UDP-2-N,3-O-bis[(3R)-3-hydroxyacyl]-alpha-D-glucosamine + holo-[ACP] + H(+). It participates in bacterial outer membrane biogenesis; LPS lipid A biosynthesis. Its function is as follows. Catalyzes the N-acylation of UDP-3-O-acylglucosamine using 3-hydroxyacyl-ACP as the acyl donor. Is involved in the biosynthesis of lipid A, a phosphorylated glycolipid that anchors the lipopolysaccharide to the outer membrane of the cell. The chain is UDP-3-O-acylglucosamine N-acyltransferase from Chlamydia pneumoniae (Chlamydophila pneumoniae).